The following is a 398-amino-acid chain: 1-deoxy-D-xylulose 5-phosphate reductoisomerase (398 aa).

Positions 10, 11, 12, 13, 36, 37, 38, and 124 each coordinate NADPH. Position 125 (lysine 125) interacts with 1-deoxy-D-xylulose 5-phosphate. Glutamate 126 serves as a coordination point for NADPH. Aspartate 150 contributes to the Mn(2+) binding site. 1-deoxy-D-xylulose 5-phosphate is bound by residues serine 151, glutamate 152, serine 186, and histidine 209. Glutamate 152 contacts Mn(2+). Residue glycine 215 participates in NADPH binding. 1-deoxy-D-xylulose 5-phosphate contacts are provided by serine 222, asparagine 227, lysine 228, and glutamate 231. Mn(2+) is bound at residue glutamate 231.

Belongs to the DXR family. Homodimer. Mg(2+) is required as a cofactor. Mn(2+) serves as cofactor.

The enzyme catalyses 2-C-methyl-D-erythritol 4-phosphate + NADP(+) = 1-deoxy-D-xylulose 5-phosphate + NADPH + H(+). The protein operates within isoprenoid biosynthesis; isopentenyl diphosphate biosynthesis via DXP pathway; isopentenyl diphosphate from 1-deoxy-D-xylulose 5-phosphate: step 1/6. Its function is as follows. Catalyzes the NADPH-dependent rearrangement and reduction of 1-deoxy-D-xylulose-5-phosphate (DXP) to 2-C-methyl-D-erythritol 4-phosphate (MEP). This is 1-deoxy-D-xylulose 5-phosphate reductoisomerase from Photorhabdus laumondii subsp. laumondii (strain DSM 15139 / CIP 105565 / TT01) (Photorhabdus luminescens subsp. laumondii).